A 1987-amino-acid polypeptide reads, in one-letter code: Transcription factor 20 (1987 aa).

Positions 1–22 (MQSFREQSSYHGNQQSYPQEVH) are enriched in polar residues. Disordered stretches follow at residues 1–79 (MQSF…QGYQ), 96–432 (DTVA…GNVP), 446–481 (LSPT…DPGL), 502–816 (LLSD…GTAR), and 844–891 (PHWG…SLSE). Residues 51 to 74 (TGSSSSGRRGTAAAAAAMASETSG) are compositionally biased toward low complexity. Omega-N-methylarginine is present on R59. A compositionally biased stretch (polar residues) spans 121-142 (QGSSFGNQYASEGHVSQFQAQH). A compositionally biased stretch (low complexity) spans 163–205 (SAQYQQQASSQQQQQQQQQQQQQQQQQQQQVQQLRQQLYQSHQ). Over residues 206 to 235 (PLPQTTGQPASGSSHLQPMQRPSTLPSSAG) the composition is skewed to polar residues. The span at 248–277 (QSSASSSSSSSFPSPQRFSQSGQSYDGSYS) shows a compositional bias: low complexity. Over residues 289–311 (VGSNAQAYGTQSNYSYQPQSMKN) the composition is skewed to polar residues. A Glycyl lysine isopeptide (Lys-Gly) (interchain with G-Cter in SUMO2) cross-link involves residue K316. Residues 322–354 (QQGQQQQQQQPQPQQQQPQQQQQQQQQQQHPPQ) show a composition bias toward low complexity. The span at 357-377 (MQYTNAATKMPLQSQVGQYNQ) shows a compositional bias: polar residues. Residues 396 to 416 (SNPSPAASVVQSPSCSSTPSP) are compositionally biased toward low complexity. The span at 417–432 (LMQSGENLQCGQGNVP) shows a compositional bias: polar residues. The segment covering 446 to 456 (LSPTPSMMPSP) has biased composition (low complexity). Residues S447 and S458 each carry the phosphoserine modification. Composition is skewed to polar residues over residues 526 to 537 (SCTNSEGSSQPE), 566 to 576 (LSGQSTSSDTT), and 585 to 605 (AGSS…TSPA). 4 positions are modified to phosphoserine: S567, S588, S603, and S612. Residues 618-627 (TSLSSEGNTK) show a composition bias toward polar residues. K631 is modified (N6-acetyllysine). A compositionally biased stretch (basic and acidic residues) spans 645 to 657 (RVEKSGGQDKGSQ). A compositionally biased stretch (polar residues) spans 666 to 682 (RPPSNSGVKEISHTSLP). A Phosphoserine modification is found at S669. The segment covering 693 to 715 (GNKNGDNNSSNHNGEGNGPSSHS) has biased composition (low complexity). Residues 722–731 (TGRTEPSKSP) show a composition bias toward polar residues. Glycyl lysine isopeptide (Lys-Gly) (interchain with G-Cter in SUMO2) cross-links involve residues K739, K762, K777, K852, K861, and K873. Basic and acidic residues predominate over residues 761-777 (EKGDFGSHGERKGRNEK). S900 is modified (phosphoserine). Residues K949 and K951 each participate in a glycyl lysine isopeptide (Lys-Gly) (interchain with G-Cter in SUMO2) cross-link. Residues 949–1065 (KLKSQSGQIK…GDPHHMNPHM (117 aa)) form a disordered region. Residue K958 forms a Glycyl lysine isopeptide (Lys-Gly) (interchain with G-Cter in SUMO1); alternate linkage. A Glycyl lysine isopeptide (Lys-Gly) (interchain with G-Cter in SUMO2); alternate cross-link involves residue K958. Over residues 974–989 (KSGDHCHPTSIKHETY) the composition is skewed to basic and acidic residues. Residue K985 forms a Glycyl lysine isopeptide (Lys-Gly) (interchain with G-Cter in SUMO2) linkage. 2 positions are modified to phosphoserine: S994 and S1033. Residue K1043 forms a Glycyl lysine isopeptide (Lys-Gly) (interchain with G-Cter in SUMO2) linkage. R1052 is subject to Omega-N-methylarginine. Residue S1081 is modified to Phosphoserine. Glycyl lysine isopeptide (Lys-Gly) (interchain with G-Cter in SUMO2) cross-links involve residues K1114, K1126, K1165, K1201, K1206, K1211, K1238, K1259, K1295, and K1302. The interval 1136–1372 (VIAAAQHRQE…SPAKTKILPP (237 aa)) is disordered. A compositionally biased stretch (basic and acidic residues) spans 1158–1170 (DRVRSPLKNDKDG). Residues 1198–1219 (LPAKSMELKHSSQKLQESCWDL) are leucine-zipper. The short motif at 1282-1295 (RRRVRSFISPIPSK) is the Nuclear localization signal element. 2 stretches are compositionally biased toward basic and acidic residues: residues 1305–1321 (NADD…EGAD) and 1332–1346 (HSQD…DSSK). S1333 bears the Phosphoserine mark. K1337 is covalently cross-linked (Glycyl lysine isopeptide (Lys-Gly) (interchain with G-Cter in SUMO2)). S1363 bears the Phosphoserine mark. A Glycyl lysine isopeptide (Lys-Gly) (interchain with G-Cter in SUMO2) cross-link involves residue K1366. At S1389 the chain carries Phosphoserine. Residues 1415–1434 (SLKSGPPEGGTVATQEAEME) are disordered. Residues K1417, K1437, K1456, and K1474 each participate in a glycyl lysine isopeptide (Lys-Gly) (interchain with G-Cter in SUMO2) cross-link. Positions 1446 to 1636 (SVTNQESNVE…KQAVPIVEPQ (191 aa)) are disordered. Residues 1463-1479 (EEWRGSGDDKVKTEAHV) are compositionally biased toward basic and acidic residues. Positions 1481–1501 (TASTGKEPSGTMTSTASQKPG) are enriched in polar residues. Residue K1538 forms a Glycyl lysine isopeptide (Lys-Gly) (interchain with G-Cter in SUMO2) linkage. S1550 carries the post-translational modification Phosphoserine. K1552 is covalently cross-linked (Glycyl lysine isopeptide (Lys-Gly) (interchain with G-Cter in SUMO2)). Residues 1565 to 1579 (GKKKGRPIGSVNKQK) constitute a DNA-binding region (a.T hook). Positions 1584–1594 (QPPPPPQPPQM) are enriched in pro residues. A Nuclear localization signal motif is present at residues 1604–1628 (KPKKQRQRRERRKPGAQPRKRKTKQ). The segment covering 1606 to 1627 (KKQRQRRERRKPGAQPRKRKTK) has biased composition (basic residues). A Glycyl lysine isopeptide (Lys-Gly) (interchain with G-Cter in SUMO2) cross-link involves residue K1641. 2 disordered regions span residues 1685 to 1710 (QTKL…SKVL) and 1760 to 1865 (TLPK…GPEL). S1697 carries the phosphoserine modification. Phosphothreonine occurs at positions 1699, 1790, and 1792. A Nuclear localization signal motif is present at residues 1812–1819 (RFKRRHRS). The span at 1850-1859 (DTKPSVPTTS) shows a compositional bias: polar residues. The segment at 1856 to 1892 (PTTSEGGPELELQIPELPLDSNEFWVHEGCILWANGI) adopts a C2HC pre-PHD-type; degenerate zinc-finger fold. The PHD-type zinc finger occupies 1912–1960 (MKCSHCQEAGATLGCYNKGCSFRYHYPCAIDADCLLHEENFSVRCPKHK). A disordered region spans residues 1966 to 1987 (PLPPLQNKTAKGSLSTEQSERG). Positions 1971–1987 (QNKTAKGSLSTEQSERG) are enriched in polar residues.

Homodimer. Interacts with RNF4 and JUN. Binds to the regulatory region of MMP3. Expressed in brain, lung, liver, kidney and testes.

It localises to the nucleus. Its function is as follows. Transcriptional activator that binds to the regulatory region of MMP3 and thereby controls stromelysin expression. It stimulates the activity of various transcriptional activators such as JUN, SP1, PAX6 and ETS1, suggesting a function as a coactivator. This chain is Transcription factor 20 (Tcf20), found in Mus musculus (Mouse).